A 1131-amino-acid chain; its full sequence is Phytochrome B1 (1131 aa).

Basic residues predominate over residues 1–11; it reads MASGSRTKHSY. Residues 1-26 form a disordered region; that stretch reads MASGSRTKHSYHNSSQGQAQSSGTSN. Over residues 14 to 25 the composition is skewed to low complexity; sequence SSQGQAQSSGTS. In terms of domain architecture, GAF spans 229–408; the sequence is DIKLLCDTVV…AFGLQLNMEL (180 aa). A phytochromobilin-binding site is contributed by Cys334. PAS domains lie at 622–693 and 756–808; these read VARE…LRGV and DYKA…GEIF. One can recognise a Histidine kinase domain in the interval 904–1124; it reads YICQEVKSPL…MIILDLPMTR (221 aa).

This sequence belongs to the phytochrome family. Homodimer. In terms of processing, contains one covalently linked phytochromobilin chromophore.

Its function is as follows. Regulatory photoreceptor which exists in two forms that are reversibly interconvertible by light: the Pr form that absorbs maximally in the red region of the spectrum and the Pfr form that absorbs maximally in the far-red region. Photoconversion of Pr to Pfr induces an array of morphogenic responses, whereas reconversion of Pfr to Pr cancels the induction of those responses. Pfr controls the expression of a number of nuclear genes including those encoding the small subunit of ribulose-bisphosphate carboxylase, chlorophyll A/B binding protein, protochlorophyllide reductase, rRNA, etc. It also controls the expression of its own gene(s) in a negative feedback fashion. In Solanum lycopersicum (Tomato), this protein is Phytochrome B1.